A 373-amino-acid polypeptide reads, in one-letter code: T-protein (373 aa).

A Chorismate mutase domain is found at 1–90; sequence MVAELTALRD…ESYTSENDKG (90 aa). The Prephenate/arogenate dehydrogenase domain maps to 99–361; it reads RPVVIVGGKG…DHAKRFLVES (263 aa).

This sequence in the C-terminal section; belongs to the prephenate/arogenate dehydrogenase family.

It localises to the cytoplasm. It catalyses the reaction chorismate = prephenate. The enzyme catalyses prephenate + NAD(+) = 3-(4-hydroxyphenyl)pyruvate + CO2 + NADH. It participates in amino-acid biosynthesis; L-tyrosine biosynthesis; (4-hydroxyphenyl)pyruvate from prephenate (NAD(+) route): step 1/1. The protein operates within metabolic intermediate biosynthesis; prephenate biosynthesis; prephenate from chorismate: step 1/1. The chain is T-protein (tyrA) from Enterobacter agglomerans (Erwinia herbicola).